Consider the following 667-residue polypeptide: Chaperone protein DnaK (667 aa).

Residue T196 is modified to Phosphothreonine; by autocatalysis. Disordered stretches follow at residues 495–525 (EANS…RKER) and 595–667 (AGEE…GDDE). The span at 506–525 (EKMKEEAEQHAEEDERRKER) shows a compositional bias: basic and acidic residues. Residues 595 to 612 (AGEEIREAQQQQAQQGAA) are compositionally biased toward low complexity. The segment covering 630 to 641 (GPAGGPTGGPAS) has biased composition (gly residues). Residues 647 to 667 (DSDEEDVQDADYEVVDEGDDE) are compositionally biased toward acidic residues.

It belongs to the heat shock protein 70 family.

Functionally, acts as a chaperone. The polypeptide is Chaperone protein DnaK (Salinibacter ruber (strain DSM 13855 / M31)).